The sequence spans 88 residues: Small ribosomal subunit protein uS15 (88 aa).

Belongs to the universal ribosomal protein uS15 family. In terms of assembly, part of the 30S ribosomal subunit. Forms a bridge to the 50S subunit in the 70S ribosome, contacting the 23S rRNA.

In terms of biological role, one of the primary rRNA binding proteins, it binds directly to 16S rRNA where it helps nucleate assembly of the platform of the 30S subunit by binding and bridging several RNA helices of the 16S rRNA. Forms an intersubunit bridge (bridge B4) with the 23S rRNA of the 50S subunit in the ribosome. This is Small ribosomal subunit protein uS15 from Mesoplasma florum (strain ATCC 33453 / NBRC 100688 / NCTC 11704 / L1) (Acholeplasma florum).